Consider the following 1343-residue polypeptide: Protein cordon-bleu (1343 aa).

Disordered regions lie at residues 1 to 51 (MNLG…GDCK), 301 to 479 (KVEL…PAAE), 522 to 613 (VSVA…NGYE), 733 to 808 (IDKP…TRVL), 1056 to 1077 (EKPT…KSLD), and 1105 to 1148 (INNF…NVFG). A compositionally biased stretch (pro residues) spans 20–30 (APPPPRPPQPA). Residues 305–310 (KKRRAP) carry the KKRRAP 1 motif. Over residues 324–335 (SQISLGSPSSHN) the composition is skewed to polar residues. Positions 338–343 (KKRKAP) match the KKRRAP 2 motif. Over residues 343 to 354 (PAPPPTPPPSTP) the composition is skewed to pro residues. The segment covering 390–400 (DLSHSIEDSEP) has biased composition (basic and acidic residues). The span at 406 to 422 (SSSSGDDAAAVGSSSSS) shows a compositional bias: low complexity. Over residues 445-460 (PEPKPEYEPELKKEAS) the composition is skewed to basic and acidic residues. Polar residues predominate over residues 552 to 573 (ERMQSVSPMDIMSLNSDSTLPV). Basic and acidic residues predominate over residues 746–757 (PSQDAKITDNME). The segment covering 773-789 (VELTSQKDTVLQKSQSF) has biased composition (polar residues). The span at 1105–1122 (INNFPDTSSARQTPTDTT) shows a compositional bias: polar residues. The segment covering 1128–1137 (KKPELHKSEI) has biased composition (basic and acidic residues). 2 consecutive WH2 domains span residues 1167-1187 (IHSS…LRKV) and 1207-1227 (ERSA…LKKT). The tract at residues 1246 to 1297 (NVHTEVISPRPTSPDFVPPLPPSFSPPPPPPPPLAPAKPPVVLPPGGNPEAA) is disordered. The span at 1261–1292 (FVPPLPPSFSPPPPPPPPLAPAKPPVVLPPGG) shows a compositional bias: pro residues. Residues 1297–1317 (AREALLEAIRSGSGAQQLRKV) enclose the WH2 3 domain.

In terms of assembly, interacts with pacsin1.

The protein resides in the cell membrane. The protein localises to the cytoplasm. It is found in the cytoskeleton. Its subcellular location is the cell projection. It localises to the ruffle. The protein resides in the cytosol. Functionally, plays an important role in the reorganization of the actin cytoskeleton. Binds to and sequesters actin monomers (G actin). Nucleates actin polymerization by assembling three actin monomers in cross-filament orientation and thereby promotes growth of actin filaments at the barbed end. Can also mediate actin depolymerization at barbed ends and severing of actin filaments. Promotes formation of cell ruffles. Regulates neuron morphogenesis and increases branching of axons and dendrites. Required for normal embryonic development, including normal development of laterality, normal body size and shape, as well as normal brain, heart and kidney development. Required for normal development of stereocilia and kinocilia in sensory hair cells of neuromasts in the posterior lateral line organ, and thus also for balance keeping and normal swimming behavior. This Danio rerio (Zebrafish) protein is Protein cordon-bleu (cobl).